The sequence spans 485 residues: Regulatory protein ViaA (485 aa).

Belongs to the ViaA family. In terms of assembly, homodimer. Interacts with RavA.

The protein resides in the cytoplasm. In terms of biological role, component of the RavA-ViaA chaperone complex, which may act on the membrane to optimize the function of some of the respiratory chains. ViaA stimulates the ATPase activity of RavA. This chain is Regulatory protein ViaA, found in Proteus mirabilis (strain HI4320).